The sequence spans 258 residues: 5'-nucleotidase SurE (258 aa).

Residues aspartate 8, aspartate 9, serine 40, and asparagine 92 each coordinate a divalent metal cation.

It belongs to the SurE nucleotidase family. The cofactor is a divalent metal cation.

It is found in the cytoplasm. The catalysed reaction is a ribonucleoside 5'-phosphate + H2O = a ribonucleoside + phosphate. Nucleotidase that shows phosphatase activity on nucleoside 5'-monophosphates. This chain is 5'-nucleotidase SurE, found in Brucella anthropi (strain ATCC 49188 / DSM 6882 / CCUG 24695 / JCM 21032 / LMG 3331 / NBRC 15819 / NCTC 12168 / Alc 37) (Ochrobactrum anthropi).